Reading from the N-terminus, the 398-residue chain is 1-deoxy-D-xylulose 5-phosphate reductoisomerase (398 aa).

Residues T10, G11, S12, V13, G36, K37, N38, and N124 each coordinate NADPH. K125 serves as a coordination point for 1-deoxy-D-xylulose 5-phosphate. E126 contacts NADPH. D150 serves as a coordination point for Mn(2+). 1-deoxy-D-xylulose 5-phosphate is bound by residues S151, E152, S186, and H209. E152 is a Mn(2+) binding site. G215 serves as a coordination point for NADPH. 1-deoxy-D-xylulose 5-phosphate contacts are provided by S222, N227, K228, and E231. E231 contacts Mn(2+).

It belongs to the DXR family. In terms of assembly, homodimer. It depends on Mg(2+) as a cofactor. Mn(2+) serves as cofactor.

The enzyme catalyses 2-C-methyl-D-erythritol 4-phosphate + NADP(+) = 1-deoxy-D-xylulose 5-phosphate + NADPH + H(+). It participates in isoprenoid biosynthesis; isopentenyl diphosphate biosynthesis via DXP pathway; isopentenyl diphosphate from 1-deoxy-D-xylulose 5-phosphate: step 1/6. Functionally, catalyzes the NADPH-dependent rearrangement and reduction of 1-deoxy-D-xylulose-5-phosphate (DXP) to 2-C-methyl-D-erythritol 4-phosphate (MEP). The polypeptide is 1-deoxy-D-xylulose 5-phosphate reductoisomerase (Photorhabdus laumondii subsp. laumondii (strain DSM 15139 / CIP 105565 / TT01) (Photorhabdus luminescens subsp. laumondii)).